A 914-amino-acid polypeptide reads, in one-letter code: Beta-mannosidase A (914 aa).

The signal sequence occupies residues 1-20; sequence MRFTATAAALVASSIPATLG. N-linked (GlcNAc...) asparagine glycosylation is found at N39, N79, N230, N265, N299, N309, and N330. E462 (proton donor) is an active-site residue. N-linked (GlcNAc...) asparagine glycans are attached at residues N591, N614, N641, N721, N744, N773, N784, and N909.

The protein belongs to the glycosyl hydrolase 2 family. Beta-mannosidase A subfamily. As to quaternary structure, homodimer.

The protein resides in the secreted. It carries out the reaction Hydrolysis of terminal, non-reducing beta-D-mannose residues in beta-D-mannosides.. The protein operates within glycan metabolism; N-glycan degradation. Exoglycosidase that cleaves the single beta-linked mannose residue from the non-reducing end of beta-mannosidic oligosaccharides of various complexity and length. Involved in the degradation of polymeric mannan and galactomannan. The protein is Beta-mannosidase A (mndA) of Aspergillus flavus (strain ATCC 200026 / FGSC A1120 / IAM 13836 / NRRL 3357 / JCM 12722 / SRRC 167).